The sequence spans 424 residues: Enolase (424 aa).

Q163 serves as a coordination point for (2R)-2-phosphoglycerate. The active-site Proton donor is E204. 3 residues coordinate Mg(2+): D241, E284, and D311. (2R)-2-phosphoglycerate contacts are provided by K336, R365, S366, and K387. K336 serves as the catalytic Proton acceptor.

This sequence belongs to the enolase family. Mg(2+) serves as cofactor.

The protein resides in the cytoplasm. The protein localises to the secreted. It is found in the cell surface. It catalyses the reaction (2R)-2-phosphoglycerate = phosphoenolpyruvate + H2O. It participates in carbohydrate degradation; glycolysis; pyruvate from D-glyceraldehyde 3-phosphate: step 4/5. Functionally, catalyzes the reversible conversion of 2-phosphoglycerate (2-PG) into phosphoenolpyruvate (PEP). It is essential for the degradation of carbohydrates via glycolysis. The protein is Enolase of Dictyoglomus thermophilum (strain ATCC 35947 / DSM 3960 / H-6-12).